The sequence spans 287 residues: Polyamine aminopropyltransferase (287 aa).

Residues E5 to N238 enclose the PABS domain. Residue Q33 participates in S-methyl-5'-thioadenosine binding. Positions 64 and 88 each coordinate spermidine. S-methyl-5'-thioadenosine contacts are provided by residues E108 and D140–G141. The Proton acceptor role is filled by D158. D158 to D161 is a binding site for spermidine. Position 165 (P165) interacts with S-methyl-5'-thioadenosine.

This sequence belongs to the spermidine/spermine synthase family. Homodimer or homotetramer.

The protein localises to the cytoplasm. It catalyses the reaction S-adenosyl 3-(methylsulfanyl)propylamine + putrescine = S-methyl-5'-thioadenosine + spermidine + H(+). Its pathway is amine and polyamine biosynthesis; spermidine biosynthesis; spermidine from putrescine: step 1/1. Catalyzes the irreversible transfer of a propylamine group from the amino donor S-adenosylmethioninamine (decarboxy-AdoMet) to putrescine (1,4-diaminobutane) to yield spermidine. The sequence is that of Polyamine aminopropyltransferase from Pectobacterium atrosepticum (strain SCRI 1043 / ATCC BAA-672) (Erwinia carotovora subsp. atroseptica).